Reading from the N-terminus, the 834-residue chain is Glycerol-3-phosphate acyltransferase (834 aa).

Residues 309-314 (CHRSHI) carry the HXXXXD motif motif.

Belongs to the GPAT/DAPAT family.

The protein resides in the cell inner membrane. The enzyme catalyses sn-glycerol 3-phosphate + an acyl-CoA = a 1-acyl-sn-glycero-3-phosphate + CoA. It functions in the pathway phospholipid metabolism; CDP-diacylglycerol biosynthesis; CDP-diacylglycerol from sn-glycerol 3-phosphate: step 1/3. This chain is Glycerol-3-phosphate acyltransferase, found in Pseudomonas fluorescens (strain Pf0-1).